The primary structure comprises 629 residues: tRNA uridine 5-carboxymethylaminomethyl modification enzyme MnmG (629 aa).

13 to 18 lines the FAD pocket; sequence GGGHAG. Residue 273 to 287 participates in NAD(+) binding; that stretch reads GPRYCPSIEDKVVRF.

The protein belongs to the MnmG family. As to quaternary structure, homodimer. Heterotetramer of two MnmE and two MnmG subunits. FAD is required as a cofactor.

The protein localises to the cytoplasm. Its function is as follows. NAD-binding protein involved in the addition of a carboxymethylaminomethyl (cmnm) group at the wobble position (U34) of certain tRNAs, forming tRNA-cmnm(5)s(2)U34. This is tRNA uridine 5-carboxymethylaminomethyl modification enzyme MnmG from Nitrosococcus oceani (strain ATCC 19707 / BCRC 17464 / JCM 30415 / NCIMB 11848 / C-107).